Reading from the N-terminus, the 82-residue chain is NADH-ubiquinone oxidoreductase 9.5 kDa subunit (82 aa).

A helical membrane pass occupies residues 25-43 (AYFYSCVIAGLGPVFLTVV).

It belongs to the complex I NDUFA3 subunit family. Complex I is composed of about 40 different subunits.

The protein localises to the mitochondrion inner membrane. Accessory subunit of the mitochondrial membrane respiratory chain NADH dehydrogenase (Complex I), that is believed not to be involved in catalysis. Complex I functions in the transfer of electrons from NADH to the respiratory chain. The immediate electron acceptor for the enzyme is believed to be ubiquinone. This subunit binds ubiquinone. This Neurospora crassa (strain ATCC 24698 / 74-OR23-1A / CBS 708.71 / DSM 1257 / FGSC 987) protein is NADH-ubiquinone oxidoreductase 9.5 kDa subunit (nuo9.5).